Consider the following 130-residue polypeptide: Large ribosomal subunit protein uL14 (130 aa).

The protein belongs to the universal ribosomal protein uL14 family. In terms of assembly, part of the 50S ribosomal subunit. Forms a cluster with proteins L3 and L19. In the 70S ribosome, L14 and L19 interact and together make contacts with the 16S rRNA in bridges B5 and B8.

Functionally, binds to 23S rRNA. Forms part of two intersubunit bridges in the 70S ribosome. In Leptospira biflexa serovar Patoc (strain Patoc 1 / Ames), this protein is Large ribosomal subunit protein uL14.